Here is a 310-residue protein sequence, read N- to C-terminus: Protease HtpX homolog (310 aa).

2 helical membrane-spanning segments follow: residues 16 to 36 and 55 to 75; these read NAVL…VDAI and IFPT…LVCI. His-166 is a binding site for Zn(2+). Glu-167 is a catalytic residue. His-170 provides a ligand contact to Zn(2+). A run of 2 helical transmembrane segments spans residues 182 to 202 and 214 to 234; these read VGIL…FFMG and MILW…QMYL. Position 239 (Glu-239) interacts with Zn(2+).

This sequence belongs to the peptidase M48B family. Zn(2+) is required as a cofactor.

Its subcellular location is the cell inner membrane. The sequence is that of Protease HtpX homolog from Helicobacter pylori (strain J99 / ATCC 700824) (Campylobacter pylori J99).